Here is a 1505-residue protein sequence, read N- to C-terminus: Homeobox protein cut-like 1 (1505 aa).

The stretch at 56-407 (LLKSFQGEID…ALRISNSDLS (352 aa)) forms a coiled coil. Polar residues-rich tracts occupy residues 396–407 (NAALRISNSDLS) and 440–451 (EQASNTNGTHQF). Disordered regions lie at residues 396-455 (NAAL…SPAG), 512-552 (YSTN…EEMD), 646-669 (PKRRNGSEGNITTRIRASETGSDE), and 682-704 (LQVQKTAEPAQPSSASGSGNSDD). Over residues 516–546 (SISSQSPLQQSPDVNGMAPSPSQSESAGSVS) the composition is skewed to low complexity. Glutamate 540 bears the Phosphoserine mark. The segment at residues 542-629 (AGSVSEGEEM…ILALRSIQGR (88 aa)) is a DNA-binding region (CUT 1). A compositionally biased stretch (low complexity) spans 694-703 (SSASGSGNSD). Position 763 is a phosphoserine (serine 763). The disordered stretch occupies residues 768 to 802 (SAAPEAGASALPNPPALKKEAQDAPGLDPQGAADC). Residues lysine 785, lysine 811, and lysine 842 each participate in a glycyl lysine isopeptide (Lys-Gly) (interchain with G-Cter in SUMO2) cross-link. Residues 815 to 853 (GRSGAWKDHWWSAVQPERRNAASSEEAKAEETGGGKEKG) are compositionally biased toward basic and acidic residues. The tract at residues 815–930 (GRSGAWKDHW…KPTKPSVPPL (116 aa)) is disordered. 2 stretches are compositionally biased toward polar residues: residues 868 to 877 (SQLQGPSSSE) and 887 to 911 (SPYSQSSELSLTGASRSETPQNSPL). Serine 909 bears the Phosphoserine mark. The CUT 2 DNA-binding region spans 934 to 1021 (QYEVYMYQEV…QGVLPVQGQQ (88 aa)). Residues 1036–1049 (LQQGCVSSESTPKT) show a composition bias toward polar residues. A disordered region spans residues 1036-1110 (LQQGCVSSES…QPTTPLPLSG (75 aa)). Over residues 1050 to 1066 (SASCSPAPESPMSSSES) the composition is skewed to low complexity. Serine 1059 and serine 1069 each carry phosphoserine. The segment at residues 1117-1204 (QELVAMSPEL…VEKLMDMKRM (88 aa)) is a DNA-binding region (CUT 3). The segment at 1210 to 1247 (MKRRHSSVSDSQPCEPPSVGTEYSQGASPQPQHQLKKP) is disordered. A compositionally biased stretch (polar residues) spans 1230–1242 (TEYSQGASPQPQH). The segment at residues 1244–1303 (LKKPRVVLAPEEKEALKRAYQQKPYPSPKTIEDLATQLNLKTSTVINWFHNYRSRIRREL) is a DNA-binding region (homeobox). A Phosphoserine modification is found at serine 1270. Lysine 1284 is covalently cross-linked (Glycyl lysine isopeptide (Lys-Gly) (interchain with G-Cter in SUMO2)). Positions 1312–1480 (SQGQAGASDS…SRDNPLRKKK (169 aa)) are disordered. Low complexity predominate over residues 1316–1333 (AGASDSPSARSGRAAPSS). Serine 1337 carries the phosphoserine modification. Basic and acidic residues-rich tracts occupy residues 1353–1368 (EEPKSQGEAEREEVPR) and 1384–1394 (DDARDDDHEGG). 2 stretches are compositionally biased toward low complexity: residues 1405-1436 (PASATATAAPAAPEDAATSAAAAPGEGPAAPS) and 1443-1455 (NSSSSSAPRRPSS). Serine 1455 is modified (phosphoserine). The segment covering 1467 to 1476 (GARDSRDNPL) has biased composition (basic and acidic residues). A phosphoserine mark is found at serine 1486 and serine 1496.

This sequence belongs to the CUT homeobox family. In terms of assembly, interacts with BANP. Interacts with SATB1 (via DNA-binding domains); the interaction inhibits the attachment of both proteins to DNA. Post-translationally, phosphorylated by PKA. In terms of processing, as cells progress into S phase, a fraction of CUX1 molecules is proteolytically processed into N-terminally truncated proteins of 110 kDa by CTSL. Cell cycle-dependent processing of CUX1 serves to generate a CDP/Cux p110 with distinct DNA binding and transcriptional properties.

The protein localises to the nucleus. In terms of biological role, transcription factor involved in the control of neuronal differentiation in the brain. Regulates dendrite development and branching, and dendritic spine formation in cortical layers II-III. Also involved in the control of synaptogenesis. In addition, it has probably a broad role in mammalian development as a repressor of developmentally regulated gene expression. May act by preventing binding of positively-activing CCAAT factors to promoters. Component of nf-munr repressor; binds to the matrix attachment regions (MARs) (5' and 3') of the immunoglobulin heavy chain enhancer. Represses T-cell receptor (TCR) beta enhancer function by binding to MARbeta, an ATC-rich DNA sequence located upstream of the TCR beta enhancer. Binds to the TH enhancer; may require the basic helix-loop-helix protein TCF4 as a coactivator. Functionally, plays a role in cell cycle progression, in particular at the G1/S transition. As cells progress into S phase, a fraction of CUX1 molecules is proteolytically processed into N-terminally truncated proteins of 110 kDa. While CUX1 only transiently binds to DNA and carries the CCAAT-displacement activity, CDP/Cux p110 makes a stable interaction with DNA and stimulates expression of genes such as POLA1. The sequence is that of Homeobox protein cut-like 1 from Homo sapiens (Human).